Reading from the N-terminus, the 302-residue chain is NAD kinase 2 (302 aa).

The Proton acceptor role is filled by D79. NAD(+) contacts are provided by residues 79 to 80, 153 to 154, D183, 194 to 199, A218, and N252; these read DG, NE, and TAYSLS.

This sequence belongs to the NAD kinase family. A divalent metal cation serves as cofactor.

The protein localises to the cytoplasm. It carries out the reaction NAD(+) + ATP = ADP + NADP(+) + H(+). Functionally, involved in the regulation of the intracellular balance of NAD and NADP, and is a key enzyme in the biosynthesis of NADP. Catalyzes specifically the phosphorylation on 2'-hydroxyl of the adenosine moiety of NAD to yield NADP. In Prochlorococcus marinus subsp. pastoris (strain CCMP1986 / NIES-2087 / MED4), this protein is NAD kinase 2.